Reading from the N-terminus, the 465-residue chain is Histidine--tRNA ligase (465 aa).

Belongs to the class-II aminoacyl-tRNA synthetase family. Homodimer.

It is found in the cytoplasm. The catalysed reaction is tRNA(His) + L-histidine + ATP = L-histidyl-tRNA(His) + AMP + diphosphate + H(+). This Pelagibacter ubique (strain HTCC1062) protein is Histidine--tRNA ligase (hisS).